A 253-amino-acid chain; its full sequence is Ribosomal RNA small subunit methyltransferase I (253 aa).

Basic and acidic residues predominate over residues 230–246 (RKEQRSQRSFSKGDKKP). The segment at 230–253 (RKEQRSQRSFSKGDKKPSFKRFKK) is disordered.

It belongs to the methyltransferase superfamily. RsmI family.

It localises to the cytoplasm. It carries out the reaction cytidine(1402) in 16S rRNA + S-adenosyl-L-methionine = 2'-O-methylcytidine(1402) in 16S rRNA + S-adenosyl-L-homocysteine + H(+). Its function is as follows. Catalyzes the 2'-O-methylation of the ribose of cytidine 1402 (C1402) in 16S rRNA. The sequence is that of Ribosomal RNA small subunit methyltransferase I from Leptospira borgpetersenii serovar Hardjo-bovis (strain L550).